Here is a 73-residue protein sequence, read N- to C-terminus: Small ribosomal subunit protein bS18 (73 aa).

It belongs to the bacterial ribosomal protein bS18 family. In terms of assembly, part of the 30S ribosomal subunit. Forms a tight heterodimer with protein bS6.

In terms of biological role, binds as a heterodimer with protein bS6 to the central domain of the 16S rRNA, where it helps stabilize the platform of the 30S subunit. The protein is Small ribosomal subunit protein bS18 of Coxiella burnetii (strain Dugway 5J108-111).